The sequence spans 260 residues: MIVREWLFFTMAPCDAAEPWQLGFQDAATPMMQGIIDLHHDIFFFLILILVFVSWILVRALWHFHYKKNPIPQRIVHGTTIEIIRTIFPSIILMFIAIPSFALLYSMDEVVVDPAITIKAIGHQWYRSYEYSDYNSSDEQSLTFDSYTIPEDDPELGQSRLLEVDNRVVVPAKTHIRIIVTSADVLHSWAVPSSGVKCDAVPGRLNQTSILVQREGVYYGQCSEICGTNHAFMPIVVEAVSRKDYGSRVSNQLIPQTGEA.

The Mitochondrial intermembrane portion of the chain corresponds to M1 to D41. Residues I42 to V58 form a helical membrane-spanning segment. At R59–E82 the chain is on the mitochondrial matrix side. The chain crosses the membrane as a helical span at residues I83–L104. The Mitochondrial intermembrane portion of the chain corresponds to Y105–A260. Residues H187, C222, E224, C226, H230, and M233 each contribute to the Cu cation site. E224 serves as a coordination point for Mg(2+).

It belongs to the cytochrome c oxidase subunit 2 family. In terms of assembly, component of the cytochrome c oxidase (complex IV, CIV), a multisubunit enzyme composed of a catalytic core of 3 subunits and several supernumerary subunits. The complex exists as a monomer or a dimer and forms supercomplexes (SCs) in the inner mitochondrial membrane with ubiquinol-cytochrome c oxidoreductase (cytochrome b-c1 complex, complex III, CIII). The cofactor is Cu cation.

It localises to the mitochondrion inner membrane. The enzyme catalyses 4 Fe(II)-[cytochrome c] + O2 + 8 H(+)(in) = 4 Fe(III)-[cytochrome c] + 2 H2O + 4 H(+)(out). Component of the cytochrome c oxidase, the last enzyme in the mitochondrial electron transport chain which drives oxidative phosphorylation. The respiratory chain contains 3 multisubunit complexes succinate dehydrogenase (complex II, CII), ubiquinol-cytochrome c oxidoreductase (cytochrome b-c1 complex, complex III, CIII) and cytochrome c oxidase (complex IV, CIV), that cooperate to transfer electrons derived from NADH and succinate to molecular oxygen, creating an electrochemical gradient over the inner membrane that drives transmembrane transport and the ATP synthase. Cytochrome c oxidase is the component of the respiratory chain that catalyzes the reduction of oxygen to water. Electrons originating from reduced cytochrome c in the intermembrane space (IMS) are transferred via the dinuclear copper A center (CU(A)) of subunit 2 and heme A of subunit 1 to the active site in subunit 1, a binuclear center (BNC) formed by heme A3 and copper B (CU(B)). The BNC reduces molecular oxygen to 2 water molecules using 4 electrons from cytochrome c in the IMS and 4 protons from the mitochondrial matrix. The sequence is that of Cytochrome c oxidase subunit 2 (COX2) from Beta vulgaris (Sugar beet).